Reading from the N-terminus, the 394-residue chain is MAKAKFERIKPHVNVGTIGHVDHGKTTLTAAISHVLAKTYGGEAKDFSQIDNAPEERERGITINTSHIEYDTPTRHYAHVDCPGHADYVKNMITGAAQMDGAILVVASTDGPMPQTREHILLSRQVGVPYIIVFMNKCDMVDDEELLELVEMEVRELLSEYDFPGDDLPVIQGSALKALEGQPEWEAKIIELANALDSYIPEPQRDIDKPFLLPIEDVFSISGRGTVVTGRVERGIVKVGDEVEIVGVRTTTKTTCTGVEMFRKLLDEGRAGENCGVLLRGTKRDDVERGQVLAKPGSINPHTTFESEVYVLSKEEGGRHTPFFKGYRPQFYFRTTDVTGTIELPEGVEMVMPGDNIKMVVTLICPIAMDEGLRFAIREGGRTVGAGVVAKIIA.

One can recognise a tr-type G domain in the interval 10–204; sequence KPHVNVGTIG…ALDSYIPEPQ (195 aa). Residues 19-26 are G1; it reads GHVDHGKT. 19-26 is a binding site for GTP; sequence GHVDHGKT. Threonine 26 is a binding site for Mg(2+). Residues 60–64 form a G2 region; the sequence is GITIN. The G3 stretch occupies residues 81 to 84; the sequence is DCPG. GTP is bound by residues 81 to 85 and 136 to 139; these read DCPGH and NKCD. The G4 stretch occupies residues 136–139; sequence NKCD. Residues 174–176 form a G5 region; that stretch reads SAL.

The protein belongs to the TRAFAC class translation factor GTPase superfamily. Classic translation factor GTPase family. EF-Tu/EF-1A subfamily. In terms of assembly, monomer.

It localises to the cytoplasm. The enzyme catalyses GTP + H2O = GDP + phosphate + H(+). Its function is as follows. GTP hydrolase that promotes the GTP-dependent binding of aminoacyl-tRNA to the A-site of ribosomes during protein biosynthesis. The protein is Elongation factor Tu 1 of Shewanella baltica (strain OS195).